A 172-amino-acid polypeptide reads, in one-letter code: Large ribosomal subunit protein uL10 (172 aa).

This sequence belongs to the universal ribosomal protein uL10 family. Part of the ribosomal stalk of the 50S ribosomal subunit. The N-terminus interacts with L11 and the large rRNA to form the base of the stalk. The C-terminus forms an elongated spine to which L12 dimers bind in a sequential fashion forming a multimeric L10(L12)X complex.

Forms part of the ribosomal stalk, playing a central role in the interaction of the ribosome with GTP-bound translation factors. The protein is Large ribosomal subunit protein uL10 of Chlamydia trachomatis serovar A (strain ATCC VR-571B / DSM 19440 / HAR-13).